Reading from the N-terminus, the 103-residue chain is Large ribosomal subunit protein bL21 (103 aa).

This sequence belongs to the bacterial ribosomal protein bL21 family. In terms of assembly, part of the 50S ribosomal subunit. Contacts protein L20.

This protein binds to 23S rRNA in the presence of protein L20. The chain is Large ribosomal subunit protein bL21 from Shewanella denitrificans (strain OS217 / ATCC BAA-1090 / DSM 15013).